The sequence spans 329 residues: Deoxynucleotidyltransferase terminal-interacting protein 1 (329 aa).

The tract at residues 1–27 (MGATGDVEQPRGPGGAERGGPELGDAG) is disordered. Gly residues predominate over residues 12–22 (GPGGAERGGPE). Residues 56-147 (MTTSFTDPAI…RLTHELPGIK (92 aa)) form an important for dimerization region. The a.T hook DNA-binding region spans 159 to 173 (RGSPIPKKRKGRPPG). The residue at position 161 (S161) is a Phosphoserine. The Nuclear localization signal motif lies at 164–170 (PKKRKGR). Positions 197-316 (REGPKWDPAR…MRKYMETLRT (120 aa)) are important for DNA and nucleosome binding. The segment at residues 216–237 (GSRANKALGMGGTRGRIYIKHP) is a DNA-binding region (H-T-H motif).

In terms of assembly, monomer and homodimer. A minor proportion may form homotrimers. Interacts with ZNF541. Interacts with the terminal deoxynucleotidyltransferase DNTT. Interacts with TRERF1. Identified in a histone deacetylase complex that contains DNTTIP1, HDAC1 and MIDEAS; this complex assembles into a tetramer that contains four copies of each protein chain. Component of a histone deacetylase complex containing DNTTIP1, ZNF541, HDAC1 and HDAC2. Identified in a complex with KCTD19, HDAC1, HDAC2 and ZNF541.

Its subcellular location is the nucleus. Its function is as follows. Increases DNTT terminal deoxynucleotidyltransferase activity (in vitro). Also acts as a transcriptional regulator, binding to the consensus sequence 5'-GNTGCATG-3' following an AT-tract. Associates with RAB20 promoter and positively regulates its transcription. Binds DNA and nucleosomes; may recruit HDAC1 complexes to nucleosomes or naked DNA. This chain is Deoxynucleotidyltransferase terminal-interacting protein 1 (DNTTIP1), found in Bos taurus (Bovine).